The sequence spans 488 residues: Dipeptide and tripeptide permease B (488 aa).

The Cytoplasmic segment spans residues 1–27 (MSKTASVGLWDQPKPFFMIFFVELWER). Residues 28–48 (FGFYGVQGILAIYFVQQLGFS) traverse the membrane as a helical segment. Topologically, residues 49–52 (EEQS) are periplasmic. Residues 53-73 (FITFGAFTALVYGLISVGGYV) traverse the membrane as a helical segment. Residues 74 to 82 (GDHILGTKR) are Cytoplasmic-facing. Residues 83 to 103 (TIVLGAIVMAIGYYMIGLSIM) traverse the membrane as a helical segment. The Periplasmic portion of the chain corresponds to 104-106 (KPE). The chain crosses the membrane as a helical span at residues 107–127 (LIFYALGTVAVGNGLFKANPA). The Cytoplasmic portion of the chain corresponds to 128-146 (SLLAKCYQPQDPRLDGAFT). The helical transmembrane segment at 147–167 (LFYMSINLGSLFSLSLAPVIA) threads the bilayer. The Periplasmic segment spans residues 168 to 172 (EKYGY). Residues 173–193 (TVTYNICGIGLIIALLVYIAC) traverse the membrane as a helical segment. Residues 194–211 (RRMVHNIGSAPDHHPVKP) are Cytoplasmic-facing. A helical transmembrane segment spans residues 212–232 (IGLIAVLIGSVVMVGVCAWLL). The Periplasmic portion of the chain corresponds to 233–234 (HN). A helical transmembrane segment spans residues 235–255 (IKVANIALFAITTIVVLIFFW). Topologically, residues 256–267 (QAFKQNRVGRNK) are cytoplasmic. The chain crosses the membrane as a helical span at residues 268 to 288 (MFVAFILMLQAVVFFILYNQM). Residues 289–311 (PMSLNFFAINNVHHQILGFDVNP) are Periplasmic-facing. Residues 312 to 332 (VSFQAFNPFWIIIVSPILAVV) traverse the membrane as a helical segment. The Cytoplasmic segment spans residues 333–348 (YTKLGAKGKDFSMPAK). A helical transmembrane segment spans residues 349 to 369 (FTFGMFLCSLGFLTAAASGLF). Residues 370-378 (ADAQGITSP) are Periplasmic-facing. Residues 379–399 (WFIVLVYLFQSVGELMISALG) form a helical membrane-spanning segment. At 400–423 (LAMVAAFVPSYLTGFILGMWFLSQ) the chain is on the cytoplasmic side. A helical transmembrane segment spans residues 424-444 (AVASMLASHVAALTATPVGVT). The Periplasmic segment spans residues 445–455 (DPLQTLPIYMS). The chain crosses the membrane as a helical span at residues 456–476 (VFGKIGVATLIVAIIMTFMVP). Residues 477–488 (WLNRIMREEVKA) are Cytoplasmic-facing.

It belongs to the major facilitator superfamily. Proton-dependent oligopeptide transporter (POT/PTR) (TC 2.A.17) family. DtpB subfamily.

Its subcellular location is the cell inner membrane. Proton-dependent permease that transports di- and tripeptides. The chain is Dipeptide and tripeptide permease B from Xenorhabdus bovienii (strain SS-2004) (Xenorhabdus nematophila subsp. bovienii).